The following is a 264-amino-acid chain: Thiazole synthase (264 aa).

The active-site Schiff-base intermediate with DXP is the Lys106. 1-deoxy-D-xylulose 5-phosphate contacts are provided by residues Gly167, 193–194 (AG), and 215–216 (NS).

It belongs to the ThiG family. In terms of assembly, homotetramer. Forms heterodimers with either ThiH or ThiS.

It is found in the cytoplasm. The enzyme catalyses [ThiS sulfur-carrier protein]-C-terminal-Gly-aminoethanethioate + 2-iminoacetate + 1-deoxy-D-xylulose 5-phosphate = [ThiS sulfur-carrier protein]-C-terminal Gly-Gly + 2-[(2R,5Z)-2-carboxy-4-methylthiazol-5(2H)-ylidene]ethyl phosphate + 2 H2O + H(+). It functions in the pathway cofactor biosynthesis; thiamine diphosphate biosynthesis. Its function is as follows. Catalyzes the rearrangement of 1-deoxy-D-xylulose 5-phosphate (DXP) to produce the thiazole phosphate moiety of thiamine. Sulfur is provided by the thiocarboxylate moiety of the carrier protein ThiS. In vitro, sulfur can be provided by H(2)S. This is Thiazole synthase from Prochlorococcus marinus (strain MIT 9301).